Consider the following 353-residue polypeptide: Terpene synthase 1 (353 aa).

The DDxx(x)D/E motif motif lies at 81–86 (DDAIDA). Positions 222–230 (NDLVSYEKE) match the NDxxSxxxD/E motif motif.

It belongs to the terpene synthase family.

The catalysed reaction is (2E,6E)-farnesyl diphosphate = (2S,3R,6S,9S)-(-)-protoillud-7-ene + diphosphate. Functionally, terpene synthase that converts its substrate farnesyl diphosphate (FPP) into the sesquiterpene protoillud-7-ene. The protein is Terpene synthase 1 of Tieghemostelium lacteum (Slime mold).